The chain runs to 688 residues: Glycine--tRNA ligase beta subunit (688 aa).

Belongs to the class-II aminoacyl-tRNA synthetase family. As to quaternary structure, tetramer of two alpha and two beta subunits.

The protein localises to the cytoplasm. It carries out the reaction tRNA(Gly) + glycine + ATP = glycyl-tRNA(Gly) + AMP + diphosphate. This is Glycine--tRNA ligase beta subunit from Clostridioides difficile (strain 630) (Peptoclostridium difficile).